The sequence spans 86 residues: Large ribosomal subunit protein bL27 (86 aa).

Residues 1–24 (MAHKKGTGSTRNGRDSNSKRLGVK) are disordered.

It belongs to the bacterial ribosomal protein bL27 family.

The chain is Large ribosomal subunit protein bL27 from Prochlorococcus marinus (strain MIT 9312).